A 100-amino-acid polypeptide reads, in one-letter code: ATP synthase subunit g 2, mitochondrial (100 aa).

Belongs to the ATPase g subunit family. F-type ATPases have 2 components, CF(1) - the catalytic core - and CF(0) - the membrane proton channel. CF(0) seems to have nine subunits: a, b, c, d, e, f, g, F6 and 8 (or A6L).

The protein resides in the mitochondrion membrane. Functionally, mitochondrial membrane ATP synthase (F(1)F(0) ATP synthase or Complex V) produces ATP from ADP in the presence of a proton gradient across the membrane which is generated by electron transport complexes of the respiratory chain. F-type ATPases consist of two structural domains, F(1) - containing the extramembraneous catalytic core, and F(0) - containing the membrane proton channel, linked together by a central stalk and a peripheral stalk. During catalysis, ATP synthesis in the catalytic domain of F(1) is coupled via a rotary mechanism of the central stalk subunits to proton translocation. Part of the complex F(0) domain. Minor subunit located with subunit a in the membrane. This is ATP synthase subunit g 2, mitochondrial from Homo sapiens (Human).